Consider the following 226-residue polypeptide: PKHD-type hydroxylase PLES_48951 (226 aa).

The 101-residue stretch at 78-178 folds into the Fe2OG dioxygenase domain; sequence KVFPPLFNCY…RYASFFWTQS (101 aa). Fe cation-binding residues include His-96, Asp-98, and His-159. Arg-169 provides a ligand contact to 2-oxoglutarate.

It depends on Fe(2+) as a cofactor. L-ascorbate is required as a cofactor.

The sequence is that of PKHD-type hydroxylase PLES_48951 from Pseudomonas aeruginosa (strain LESB58).